The chain runs to 486 residues: MNDQSITVRGKDRYKSGVMEYKKMGYWEPSYQPNDTDVIALFRVTPQDGVDPVEACAAVAGESSTATWTVVWTDRLTAAEKYRAKCYRVEPVPGSPGSYFAYIAYDLDLFEPGSIANLTASIIGNVFGFKPLKALRLEDMRLPVAYVKTFQGPATGIVVERERLDKFGRPLLGATVKPKLGLSGRNYGRVVYEALKGGLDFTKDDENINSQPFMHWRERFLYCMEAVNKAQAATGEIKGTYLNVTAATMEDMYERAEFAKELGSNIIMIDLVIGYTAIQSMAKWSRKNDMILHLHRAGHSTYTRQRAHGVSFRVIAKWMRLAGVDHIHAGTVVGKLEGDPNTTRGYYDICREDFNPMRLEHGVFFDQHWASLNKLMPVASGGIHAGQMHQLLDLLGEDVVLQFGGGTIGHPRGIAAGATANRVALEAMILARNEGRDYVHEGPEILAKAAMTCTPLREALEIWKDVTFNYESTDSPDFVPTVTPAA.

Positions 125 and 175 each coordinate substrate. Lys177 acts as the Proton acceptor in catalysis. Residue Lys179 participates in substrate binding. Mg(2+) is bound by residues Lys203, Asp205, and Glu206. Lys203 carries the N6-carboxylysine modification. Residue His295 is the Proton acceptor of the active site. Residues Arg296, His328, and Ser380 each contribute to the substrate site.

It belongs to the RuBisCO large chain family. Type I subfamily. In terms of assembly, heterohexadecamer of 8 large chains and 8 small chains. It depends on Mg(2+) as a cofactor.

The enzyme catalyses 2 (2R)-3-phosphoglycerate + 2 H(+) = D-ribulose 1,5-bisphosphate + CO2 + H2O. It carries out the reaction D-ribulose 1,5-bisphosphate + O2 = 2-phosphoglycolate + (2R)-3-phosphoglycerate + 2 H(+). RuBisCO catalyzes two reactions: the carboxylation of D-ribulose 1,5-bisphosphate, the primary event in carbon dioxide fixation, as well as the oxidative fragmentation of the pentose substrate. Both reactions occur simultaneously and in competition at the same active site. The polypeptide is Ribulose bisphosphate carboxylase large chain 1 (Bradyrhizobium sp. (strain ORS 278)).